Consider the following 1544-residue polypeptide: Protein mahjong (1544 aa).

The interval 1–110 is disordered; the sequence is MSEGSGSENA…AAADRRQATK (110 aa). Positions 10–35 are enriched in low complexity; sequence AAAAEAAAEAEAATEAALMAEAVAVA. The segment covering 38-91 has biased composition (acidic residues); it reads SDEEEQPEAEDMPEQAGDNQEEDAAEQQDGGEPEADEDADADDAMSVENAENES. 2 positions are modified to phosphoserine: Ser-565 and Ser-569. Positions 912-944 constitute a LisH domain; sequence NKQQLYQLIFEHLESNGLSQTAQMLQREVGLPL. Disordered stretches follow at residues 946–973 and 987–1059; these read TPTTRSFHQSPFDYKSLPSGSSSLSRNR and GNGD…LAED. Position 955 is a phosphoserine (Ser-955). Low complexity predominate over residues 961 to 971; the sequence is SLPSGSSSLSR. The span at 1016 to 1027 shows a compositional bias: polar residues; sequence PNFSSLNTTQTP. Short sequence motifs (DWD box) lie at residues 1302-1309 and 1338-1345; these read VLWDVRSG and EVWDLRTF. Disordered stretches follow at residues 1447–1475 and 1487–1544; these read KSERSEEEDDEEVPESDEDGSDTGSENTF and LRNL…SSDD. 2 stretches are compositionally biased toward acidic residues: residues 1451–1467 and 1495–1535; these read SEEEDDEEVPESDEDGS and NDDE…DVLE.

This sequence belongs to the VPRBP/DCAF1 family. Component of the CUL4-RBX1-DDB1-DCAF1 E3 ubiquitin-protein ligase complex. Interacts with l(2)gl.

It localises to the nucleus. The protein operates within protein modification; protein ubiquitination. In terms of biological role, probable substrate recognition component of tsome E3 ubiquitin-protein ligase complex. Plays a key role in cell competition via its interaction with l(2)gl. This is Protein mahjong (mahj) from Drosophila melanogaster (Fruit fly).